We begin with the raw amino-acid sequence, 366 residues long: 3-dehydroquinate synthase (366 aa).

Residues 74–79 (SGEAAK), 108–112 (GVVGD), 132–133 (TT), Lys-144, Lys-153, and 171–174 (FLRT) each bind NAD(+). Residues Glu-186, His-249, and His-266 each coordinate Zn(2+).

This sequence belongs to the sugar phosphate cyclases superfamily. Dehydroquinate synthase family. It depends on Co(2+) as a cofactor. Zn(2+) serves as cofactor. The cofactor is NAD(+).

Its subcellular location is the cytoplasm. The catalysed reaction is 7-phospho-2-dehydro-3-deoxy-D-arabino-heptonate = 3-dehydroquinate + phosphate. It functions in the pathway metabolic intermediate biosynthesis; chorismate biosynthesis; chorismate from D-erythrose 4-phosphate and phosphoenolpyruvate: step 2/7. Its function is as follows. Catalyzes the conversion of 3-deoxy-D-arabino-heptulosonate 7-phosphate (DAHP) to dehydroquinate (DHQ). In Geobacillus thermodenitrificans (strain NG80-2), this protein is 3-dehydroquinate synthase.